We begin with the raw amino-acid sequence, 1179 residues long: Protein turtle homolog A (1179 aa).

An N-terminal signal peptide occupies residues Met-1–Gly-20. At Arg-21–Pro-734 the chain is on the extracellular side. Ig-like domains are found at residues Pro-24–Asn-124, Pro-136–Thr-216, Pro-226–Thr-318, Pro-322–Thr-410, and Pro-418–Tyr-502. Disulfide bonds link Cys-41–Cys-108 and Cys-158–Cys-206. N-linked (GlcNAc...) asparagine glycans are attached at residues Asn-188, Asn-239, and Asn-256. 3 disulfides stabilise this stretch: Cys-248–Cys-301, Cys-344–Cys-395, and Cys-440–Cys-486. 2 Fibronectin type-III domains span residues Ser-507–Ala-611 and Pro-623–Leu-718. Residues Asn-513 and Asn-524 are each glycosylated (N-linked (GlcNAc...) asparagine). The helical transmembrane segment at Val-735–Leu-755 threads the bilayer. The Cytoplasmic segment spans residues Ala-756–Leu-1179. The interval Arg-767 to Gln-807 is disordered. Over residues Gly-785–Ser-800 the composition is skewed to low complexity. At Ser-809 the chain carries Phosphoserine. 3 disordered regions span residues Leu-819–Leu-842, Pro-942–Pro-974, and Ala-1016–Asn-1079. Pro residues predominate over residues Leu-944 to Asp-954. The segment covering Ser-1020–Gly-1029 has biased composition (polar residues). The short motif at Thr-1177–Leu-1179 is the PDZ-binding element.

This sequence belongs to the immunoglobulin superfamily. Turtle family. As to quaternary structure, interacts with MAGI2 and SHANK1. In terms of tissue distribution, expressed in both cell bodies and dendrites of cortical and hippocampal neurons and also cerebellar Purkinje cells (at protein level).

Its subcellular location is the cell membrane. It localises to the synapse. Functionally, functions in dendrite outgrowth and synapse maturation. The polypeptide is Protein turtle homolog A (Igsf9) (Mus musculus (Mouse)).